The following is a 464-amino-acid chain: Olfactomedin (464 aa).

The signal sequence occupies residues 1 to 16; it reads MYICLLTLVLIHAAAA. 6 N-linked (GlcNAc...) asparagine glycosylation sites follow: Asn21, Asn85, Asn143, Asn228, Asn279, and Asn383. Positions 192-464 constitute an Olfactomedin-like domain; that stretch reads SCQHQGLAHI…LLHYDIALKP (273 aa). Cys193 and Cys394 form a disulfide bridge.

As to quaternary structure, oligomer; disulfide-linked. Post-translationally, most, if not all, of the six potential sites for N-glycosylation carry carbohydrate moieties of 8-10 sugar residues. Expressed exclusively in olfactory neuroepithelium.

It localises to the secreted. The protein resides in the extracellular space. Functionally, may influence the maintenance, growth, or differentiation of chemosensory cilia on the apical dendrites of olfactory neurons. Major component of the extracellular matrix of the olfactory neuroepithelium. The protein is Olfactomedin of Aquarana catesbeiana (American bullfrog).